We begin with the raw amino-acid sequence, 484 residues long: Cobyric acid synthase (484 aa).

The region spanning 248-435 (VLKVIVPVLP…LHGLFEGSQS (188 aa)) is the GATase cobBQ-type domain. Cys329 functions as the Nucleophile in the catalytic mechanism. His427 is an active-site residue.

It belongs to the CobB/CobQ family. CobQ subfamily.

It functions in the pathway cofactor biosynthesis; adenosylcobalamin biosynthesis. In terms of biological role, catalyzes amidations at positions B, D, E, and G on adenosylcobyrinic A,C-diamide. NH(2) groups are provided by glutamine, and one molecule of ATP is hydrogenolyzed for each amidation. The chain is Cobyric acid synthase from Pseudomonas putida (strain ATCC 700007 / DSM 6899 / JCM 31910 / BCRC 17059 / LMG 24140 / F1).